The chain runs to 496 residues: MSVTVFNPRIDDAAASDITAVTPAVTALNELSSAQAPVKSATKKVFVTTQGCQMNVYDSGKMLDVLGDSHGMEVTHDIDEADVLLMNTCSIREKAQEKVFSELGRWRKLKEKRPDLVIGVGGCVASQEGDNIQKRAPYVDMVFGPQTLHRLPELYDQSHQQREIAPKNRIGTVDVSFPSIEKFDFLPEPRVEGFKAFVSIMEGCSKYCSFCVVPYTRGEELSRPLDDVLAEIDSLAAQGVREINLLGQNVNGYRGEKDDGNICRFAELLHYVSHVDGVERIRYTTSHPLEFTDDIIDAYAQLPELVSHLHLPVQSGSNTILAAMKRNHTIDVYINQINKLKAIRPDIHLSSDFIIGFPGETDQDFQDTLTLAKELNFDHSYSFIYSKRPGTPAAELPDDVSFKTKKERLAEFQKVIIDSTLAKTHEMVGTTTRVLVEQVANRHPDCLIGTADNTRTVMFPYAVDKMDELLGKIVSVRITDFVSPHMVKGEIEAVLA.

Positions 43-160 constitute an MTTase N-terminal domain; it reads KKVFVTTQGC…LPELYDQSHQ (118 aa). Residues C52, C89, C123, C204, C208, and C211 each coordinate [4Fe-4S] cluster. The Radical SAM core domain occupies 190-422; the sequence is RVEGFKAFVS…QKVIIDSTLA (233 aa). The region spanning 425-493 is the TRAM domain; the sequence is HEMVGTTTRV…PHMVKGEIEA (69 aa).

The protein belongs to the methylthiotransferase family. MiaB subfamily. Monomer. [4Fe-4S] cluster is required as a cofactor.

The protein resides in the cytoplasm. It catalyses the reaction N(6)-dimethylallyladenosine(37) in tRNA + (sulfur carrier)-SH + AH2 + 2 S-adenosyl-L-methionine = 2-methylsulfanyl-N(6)-dimethylallyladenosine(37) in tRNA + (sulfur carrier)-H + 5'-deoxyadenosine + L-methionine + A + S-adenosyl-L-homocysteine + 2 H(+). Functionally, catalyzes the methylthiolation of N6-(dimethylallyl)adenosine (i(6)A), leading to the formation of 2-methylthio-N6-(dimethylallyl)adenosine (ms(2)i(6)A) at position 37 in tRNAs that read codons beginning with uridine. The chain is tRNA-2-methylthio-N(6)-dimethylallyladenosine synthase from Psychrobacter arcticus (strain DSM 17307 / VKM B-2377 / 273-4).